We begin with the raw amino-acid sequence, 76 residues long: Small ribosomal subunit protein bS18 (76 aa).

It belongs to the bacterial ribosomal protein bS18 family. As to quaternary structure, part of the 30S ribosomal subunit. Forms a tight heterodimer with protein bS6.

In terms of biological role, binds as a heterodimer with protein bS6 to the central domain of the 16S rRNA, where it helps stabilize the platform of the 30S subunit. This is Small ribosomal subunit protein bS18 from Marinobacter nauticus (strain ATCC 700491 / DSM 11845 / VT8) (Marinobacter aquaeolei).